A 382-amino-acid chain; its full sequence is Chaperone protein DnaJ (382 aa).

The 66-residue stretch at 5–70 (DYYETLGVSR…NKRAAYDRYG (66 aa)) folds into the J domain. The segment at 140-218 (GKTAQIRVPT…CHGQGRITEE (79 aa)) adopts a CR-type zinc-finger fold. Residues Cys153, Cys156, Cys170, Cys173, Cys192, Cys195, Cys206, and Cys209 each contribute to the Zn(2+) site. 4 CXXCXGXG motif repeats span residues 153–160 (CDVCSGSG), 170–177 (CGTCQGSG), 192–199 (CPTCHGRG), and 206–213 (CGKCHGQG).

The protein belongs to the DnaJ family. Homodimer. It depends on Zn(2+) as a cofactor.

It localises to the cytoplasm. Functionally, participates actively in the response to hyperosmotic and heat shock by preventing the aggregation of stress-denatured proteins and by disaggregating proteins, also in an autonomous, DnaK-independent fashion. Unfolded proteins bind initially to DnaJ; upon interaction with the DnaJ-bound protein, DnaK hydrolyzes its bound ATP, resulting in the formation of a stable complex. GrpE releases ADP from DnaK; ATP binding to DnaK triggers the release of the substrate protein, thus completing the reaction cycle. Several rounds of ATP-dependent interactions between DnaJ, DnaK and GrpE are required for fully efficient folding. Also involved, together with DnaK and GrpE, in the DNA replication of plasmids through activation of initiation proteins. The chain is Chaperone protein DnaJ from Rhizobium rhizogenes (strain K84 / ATCC BAA-868) (Agrobacterium radiobacter).